Reading from the N-terminus, the 240-residue chain is 1-(5-phosphoribosyl)-5-[(5-phosphoribosylamino)methylideneamino] imidazole-4-carboxamide isomerase 2 (240 aa).

The active-site Proton acceptor is the Asp8. The active-site Proton donor is the Asp129.

It belongs to the HisA/HisF family.

It localises to the cytoplasm. The enzyme catalyses 1-(5-phospho-beta-D-ribosyl)-5-[(5-phospho-beta-D-ribosylamino)methylideneamino]imidazole-4-carboxamide = 5-[(5-phospho-1-deoxy-D-ribulos-1-ylimino)methylamino]-1-(5-phospho-beta-D-ribosyl)imidazole-4-carboxamide. It participates in amino-acid biosynthesis; L-histidine biosynthesis; L-histidine from 5-phospho-alpha-D-ribose 1-diphosphate: step 4/9. The chain is 1-(5-phosphoribosyl)-5-[(5-phosphoribosylamino)methylideneamino] imidazole-4-carboxamide isomerase 2 from Ruegeria sp. (strain TM1040) (Silicibacter sp.).